The sequence spans 163 residues: Nucleotide-binding protein GTNG_0630 (163 aa).

The protein belongs to the YajQ family.

In terms of biological role, nucleotide-binding protein. The protein is Nucleotide-binding protein GTNG_0630 of Geobacillus thermodenitrificans (strain NG80-2).